The primary structure comprises 605 residues: Elongation factor 4 (605 aa).

Residues 9 to 192 (NRIRNFCIIA…AIVQRIPAPA (184 aa)) form the tr-type G domain. Residues 21–26 (DHGKST) and 139–142 (NKID) contribute to the GTP site.

Belongs to the TRAFAC class translation factor GTPase superfamily. Classic translation factor GTPase family. LepA subfamily.

The protein resides in the cell inner membrane. It catalyses the reaction GTP + H2O = GDP + phosphate + H(+). Functionally, required for accurate and efficient protein synthesis under certain stress conditions. May act as a fidelity factor of the translation reaction, by catalyzing a one-codon backward translocation of tRNAs on improperly translocated ribosomes. Back-translocation proceeds from a post-translocation (POST) complex to a pre-translocation (PRE) complex, thus giving elongation factor G a second chance to translocate the tRNAs correctly. Binds to ribosomes in a GTP-dependent manner. This Pelodictyon phaeoclathratiforme (strain DSM 5477 / BU-1) protein is Elongation factor 4.